The sequence spans 332 residues: DNA-directed RNA polymerase subunit alpha (332 aa).

The interval 2 to 234 (TVTANQVLRP…DQLSVFGDFT (233 aa)) is alpha N-terminal domain (alpha-NTD). The alpha C-terminal domain (alpha-CTD) stretch occupies residues 248-332 (VDPVLLRPID…AGVAQHGMLG (85 aa)).

Belongs to the RNA polymerase alpha chain family. Homodimer. The RNAP catalytic core consists of 2 alpha, 1 beta, 1 beta' and 1 omega subunit. When a sigma factor is associated with the core the holoenzyme is formed, which can initiate transcription.

The enzyme catalyses RNA(n) + a ribonucleoside 5'-triphosphate = RNA(n+1) + diphosphate. DNA-dependent RNA polymerase catalyzes the transcription of DNA into RNA using the four ribonucleoside triphosphates as substrates. The polypeptide is DNA-directed RNA polymerase subunit alpha (Xanthomonas axonopodis pv. citri (strain 306)).